We begin with the raw amino-acid sequence, 653 residues long: Threonine--tRNA ligase (653 aa).

The 61-residue stretch at 1–61 (MIKITFPDGN…NEDAEVKLFK (61 aa)) folds into the TGS domain. A catalytic region spans residues 243 to 542 (DHRKIGKELE…LIEHTAGKFP (300 aa)). Zn(2+) contacts are provided by C338, H389, and H519.

The protein belongs to the class-II aminoacyl-tRNA synthetase family. As to quaternary structure, homodimer. Zn(2+) is required as a cofactor.

The protein localises to the cytoplasm. The enzyme catalyses tRNA(Thr) + L-threonine + ATP = L-threonyl-tRNA(Thr) + AMP + diphosphate + H(+). Functionally, catalyzes the attachment of threonine to tRNA(Thr) in a two-step reaction: L-threonine is first activated by ATP to form Thr-AMP and then transferred to the acceptor end of tRNA(Thr). Also edits incorrectly charged L-seryl-tRNA(Thr). The sequence is that of Threonine--tRNA ligase from Porphyromonas gingivalis (strain ATCC BAA-308 / W83).